Here is a 626-residue protein sequence, read N- to C-terminus: Colicin-Ia (626 aa).

The tract at residues 23–225 (EIMAVDIYVN…TRLSELEKNG (203 aa)) is translocation (T). A compositionally biased stretch (polar residues) spans 276–286 (QQLTQQKNTPD). Residues 276–308 (QQLTQQKNTPDGKTIVSPEKFPGRSSTNHSIVV) form a disordered region. The segment at 282–385 (KNTPDGKTIV…LRQRLLDARN (104 aa)) is receptor-binding (R). Residues 450 to 626 (KDAINFTTEF…VEKANKFWGI (177 aa)) form a channel (C) region. Transmembrane regions (helical) follow at residues 580–594 (ATALVALVFSILTGS) and 597–612 (GIIGYGLLMAVTGALI).

The protein belongs to the channel forming colicin family.

It localises to the cell membrane. Functionally, this colicin is a channel-forming colicin. This class of transmembrane toxins depolarize the cytoplasmic membrane, leading to dissipation of cellular energy. Its function is as follows. Colicins are polypeptide toxins produced by and active against E.coli and closely related bacteria. This is Colicin-Ia (cia) from Escherichia coli.